We begin with the raw amino-acid sequence, 154 residues long: Low molecular weight protein-tyrosine-phosphatase PtpA (154 aa).

Catalysis depends on Cys-8, which acts as the Nucleophile. Residue Arg-14 is part of the active site. The Proton donor role is filled by Asp-120.

Belongs to the low molecular weight phosphotyrosine protein phosphatase family. In terms of assembly, interacts with host CORO1A. In terms of processing, phosphorylations at Tyr-122 and Tyr-123 are essential for phosphatase activity.

The protein localises to the secreted. The catalysed reaction is O-phospho-L-tyrosyl-[protein] + H2O = L-tyrosyl-[protein] + phosphate. In terms of biological role, secreted tyrosine phosphatase that plays a critical role during infection as a bacterial effector protein that counteracts host defenses. Required for intramacrophage survival. The protein is Low molecular weight protein-tyrosine-phosphatase PtpA (ptpA) of Staphylococcus aureus (strain bovine RF122 / ET3-1).